The chain runs to 149 residues: F420H(2)-dependent quinone reductase MT1299 (149 aa).

Coenzyme F420-(gamma-Glu)n is bound by residues 48–50 (AKT), 54–59 (RTTSLT), 70–73 (VASK), 81–85 (GWYHN), and Y130.

This sequence belongs to the F420H(2)-dependent quinone reductase family.

Its subcellular location is the cell membrane. It catalyses the reaction oxidized coenzyme F420-(gamma-L-Glu)(n) + a quinol + H(+) = reduced coenzyme F420-(gamma-L-Glu)(n) + a quinone. Functionally, involved in a F420-dependent anti-oxidant mechanism that protects M.tuberculosis against oxidative stress and bactericidal agents. Catalyzes the F420H(2)-dependent two-electron reduction of quinones to dihydroquinones, thereby preventing the formation of cytotoxic semiquinones obtained by the one-electron reduction pathway. In vitro, catalyzes the reduction of menadione to menadiol; since menaquinone is the sole quinone electron carrier in the respiratory chain in M.tuberculosis, the physiological electron acceptor for Fqr-mediated F420H(2) oxidation is therefore likely to be the endogenous menaquinone found in the membrane fraction of M.tuberculosis. The chain is F420H(2)-dependent quinone reductase MT1299 from Mycobacterium tuberculosis (strain CDC 1551 / Oshkosh).